The chain runs to 229 residues: Ribonuclease 3 (229 aa).

Residues 5–127 (LSRLERQLGY…LIGAIYLDAG (123 aa)) form the RNase III domain. Glu40 contributes to the Mg(2+) binding site. The active site involves Asp44. The Mg(2+) site is built by Asp113 and Glu116. Glu116 is a catalytic residue. The region spanning 154-224 (DPKTRLQEFL…AAAALIALGV (71 aa)) is the DRBM domain.

It belongs to the ribonuclease III family. In terms of assembly, homodimer. The cofactor is Mg(2+).

It is found in the cytoplasm. It catalyses the reaction Endonucleolytic cleavage to 5'-phosphomonoester.. Its function is as follows. Digests double-stranded RNA. Involved in the processing of primary rRNA transcript to yield the immediate precursors to the large and small rRNAs (23S and 16S). Processes some mRNAs, and tRNAs when they are encoded in the rRNA operon. Processes pre-crRNA and tracrRNA of type II CRISPR loci if present in the organism. The protein is Ribonuclease 3 of Pseudomonas syringae pv. tomato (strain ATCC BAA-871 / DC3000).